We begin with the raw amino-acid sequence, 71 residues long: NAD(P)H-quinone oxidoreductase subunit O (71 aa).

It belongs to the complex I NdhO subunit family. In terms of assembly, NDH-1 can be composed of about 15 different subunits; different subcomplexes with different compositions have been identified which probably have different functions.

It localises to the cellular thylakoid membrane. It carries out the reaction a plastoquinone + NADH + (n+1) H(+)(in) = a plastoquinol + NAD(+) + n H(+)(out). It catalyses the reaction a plastoquinone + NADPH + (n+1) H(+)(in) = a plastoquinol + NADP(+) + n H(+)(out). NDH-1 shuttles electrons from an unknown electron donor, via FMN and iron-sulfur (Fe-S) centers, to quinones in the respiratory and/or the photosynthetic chain. The immediate electron acceptor for the enzyme in this species is believed to be plastoquinone. Couples the redox reaction to proton translocation, and thus conserves the redox energy in a proton gradient. Cyanobacterial NDH-1 also plays a role in inorganic carbon-concentration. In Picosynechococcus sp. (strain ATCC 27264 / PCC 7002 / PR-6) (Agmenellum quadruplicatum), this protein is NAD(P)H-quinone oxidoreductase subunit O.